A 317-amino-acid chain; its full sequence is Ribosomal protein L11 methyltransferase (317 aa).

Thr158, Gly179, Asp201, and Asn244 together coordinate S-adenosyl-L-methionine.

Belongs to the methyltransferase superfamily. PrmA family.

It is found in the cytoplasm. The catalysed reaction is L-lysyl-[protein] + 3 S-adenosyl-L-methionine = N(6),N(6),N(6)-trimethyl-L-lysyl-[protein] + 3 S-adenosyl-L-homocysteine + 3 H(+). Methylates ribosomal protein L11. The polypeptide is Ribosomal protein L11 methyltransferase (Lactococcus lactis subsp. cremoris (strain MG1363)).